The sequence spans 895 residues: Serine-rich coiled-coil domain-containing protein 1 (895 aa).

Disordered regions lie at residues 1–142, 154–177, 332–394, and 459–497; these read MGDS…KEPS, SGRS…KQST, ELHS…RTLG, and RSSS…SSKM. The span at 43–56 shows a compositional bias: low complexity; that stretch reads SSSPSSTNSSSGST. A compositionally biased stretch (polar residues) spans 83-102; it reads TEQNLSISNGAQPSHSNMQK. A compositionally biased stretch (basic and acidic residues) spans 131–142; that stretch reads LTEDFEREKEPS. The span at 348–358 shows a compositional bias: polar residues; it reads SLQSTELSVGN. The stretch at 675-705 forms a coiled coil; the sequence is MLRLQLKDRDELISQLQAELEKVQHLQKAFA. The tract at residues 731 to 753 is disordered; that stretch reads QGGRETTHRNRTMSQSHSTRDRK.

Belongs to the CCSER family.

The sequence is that of Serine-rich coiled-coil domain-containing protein 1 (Ccser1) from Mus musculus (Mouse).